The sequence spans 758 residues: Probable TonB-dependent receptor NMB0964 (758 aa).

Positions 1–24 are cleaved as a signal peptide; sequence MAQTTLKPIVLSILLINTPLLAQA. A TBDR plug domain is found at 50–161; that stretch reads LLHTSTASDK…VAGLVDVADG (112 aa). The 588-residue stretch at 171-758 folds into the TBDR beta-barrel domain; it reads GVSGELGLRL…SFTGGVNVKF (588 aa). Positions 741–758 match the TonB C-terminal box motif; that stretch reads SDTPQMGRSFTGGVNVKF.

The protein belongs to the TonB-dependent receptor family.

The protein resides in the cell outer membrane. In terms of biological role, probable receptor, TonB-dependent. The polypeptide is Probable TonB-dependent receptor NMB0964 (Neisseria meningitidis serogroup B (strain ATCC BAA-335 / MC58)).